We begin with the raw amino-acid sequence, 364 residues long: ATP synthase gamma chain, chloroplastic (364 aa).

A chloroplast-targeting transit peptide spans Met-1–Cys-41. The segment at Pro-17 to Thr-36 is disordered. Low complexity predominate over residues Ala-25–Thr-36. Residue Cys-130 is part of the active site. Cys-240 and Cys-246 are joined by a disulfide.

The protein belongs to the ATPase gamma chain family. As to quaternary structure, F-type ATPases have 2 components, CF(1) - the catalytic core - and CF(0) - the membrane proton channel. CF(1) has five subunits: alpha(3), beta(3), gamma(1), delta(1), epsilon(1). CF(0) has four main subunits: a, b, b' and c. In terms of processing, disulfide bond; Cys-240 and Cys-246 are known to form a disulfide bridge in the dark which gives rise to an inactive enzyme. Activation can be brought about by a ferredoxin-dependent reduction of the disulfide bond in the light.

It localises to the plastid. The protein resides in the chloroplast thylakoid membrane. Its function is as follows. Produces ATP from ADP in the presence of a proton gradient across the membrane. The gamma chain is believed to be important in regulating ATPase activity and the flow of protons through the CF(0) complex. The chain is ATP synthase gamma chain, chloroplastic (ATPC) from Spinacia oleracea (Spinach).